The primary structure comprises 147 residues: 3-dehydroquinate dehydratase (147 aa).

Y23 functions as the Proton acceptor in the catalytic mechanism. Substrate is bound by residues N74, H80, and D87. H100 serves as the catalytic Proton donor. Residues 101–102 and R111 contribute to the substrate site; that span reads LS.

Belongs to the type-II 3-dehydroquinase family. In terms of assembly, homododecamer.

It carries out the reaction 3-dehydroquinate = 3-dehydroshikimate + H2O. It functions in the pathway metabolic intermediate biosynthesis; chorismate biosynthesis; chorismate from D-erythrose 4-phosphate and phosphoenolpyruvate: step 3/7. Catalyzes a trans-dehydration via an enolate intermediate. The protein is 3-dehydroquinate dehydratase of Clostridium botulinum (strain 657 / Type Ba4).